The following is a 200-amino-acid chain: Probable molybdenum cofactor guanylyltransferase (200 aa).

Residues 9 to 11 (LAG), Lys-21, Asp-69, and Asp-100 contribute to the GTP site. Position 100 (Asp-100) interacts with Mg(2+).

This sequence belongs to the MobA family. The cofactor is Mg(2+).

Its subcellular location is the cytoplasm. The enzyme catalyses Mo-molybdopterin + GTP + H(+) = Mo-molybdopterin guanine dinucleotide + diphosphate. Its function is as follows. Transfers a GMP moiety from GTP to Mo-molybdopterin (Mo-MPT) cofactor (Moco or molybdenum cofactor) to form Mo-molybdopterin guanine dinucleotide (Mo-MGD) cofactor. This Bacillus cereus (strain AH820) protein is Probable molybdenum cofactor guanylyltransferase.